We begin with the raw amino-acid sequence, 859 residues long: MNKAISDLSAHTPMMQQYWKLKNQHLDQLMFYRMGDFYEIFYEDAKKAAKLLDITLTARGQSAGQSIPMCGIPYHAAEGYLAKLVKLGESVVICEQIGDPATSKGPVDRQVVRIITPGTISDEALLDERRDNLIAAVLGDERLFGLAVLDITSGNFSVLEIKGWENLLAELERINPVELLIPDDWPPGLPAEKRRGSRRRAPWDFERDSAHKSLCQQFATQDLKGFGCENLTLAIGAAGCLLSYAKETQRTALPHLRSLRHERLDDTVILDAASRRNLELDTNLSGGRDNTLQSVMDRCQTAMGTRLLTRWLNRPLRDLTILQARQTSITCFLERYRFENLQPQLKEIGDIERILARIGLRNARPRDLARLRDALSALPELQQAMSDLDAPHLQQLAQTAGTYPELADLLQRAIIDNPPAVIRDGGVLKTGYDAELDDLQSLSENAGQFLIDLEAREKARTGLGNLKVGYNRVHGYFIELPSKQAEQAPADYIRRQTLKGAERFITPELKEFEDKALSAKSRALAREKMLYETLLEDLIGHLAPLQDTAAALAELDVLSNLAERALNLDLNCPRFVAEPCMRIEQGRHPVVEQVLSTPFVANDLALDDSTRMLVITGPNMGGKSTYMRQTALIVLLAHIGSFVPAASCELSLVDRIFTRIGSSDDLAGGRSTFMVEMSETANILHNATDKSLVLMDEVGRGTSTFDGLSLAWAAAECLAQLRAYTLFATHYFELTVLPESEPLVTNVHLNATEHNERIVFLHRVLPGPASQSYGLAVAQLAGVPGKVISRAKEHLQRLETTSLPHEQPRAKPGKPAVPQQSDMFASLPHPVLDELSKVKVDDMTPRQALDLLYTLQTRL.

617–624 provides a ligand contact to ATP; it reads GPNMGGKS. Residues 799-821 are disordered; the sequence is ETTSLPHEQPRAKPGKPAVPQQS.

Belongs to the DNA mismatch repair MutS family.

In terms of biological role, this protein is involved in the repair of mismatches in DNA. It is possible that it carries out the mismatch recognition step. This protein has a weak ATPase activity. The sequence is that of DNA mismatch repair protein MutS from Pseudomonas syringae pv. syringae (strain B728a).